The primary structure comprises 185 residues: Ribosome-recycling factor (185 aa).

It belongs to the RRF family.

Its subcellular location is the cytoplasm. Functionally, responsible for the release of ribosomes from messenger RNA at the termination of protein biosynthesis. May increase the efficiency of translation by recycling ribosomes from one round of translation to another. This chain is Ribosome-recycling factor, found in Buchnera aphidicola subsp. Acyrthosiphon pisum (strain Tuc7).